Here is a 203-residue protein sequence, read N- to C-terminus: MKAKLVSLLAQANIKISDQQIQQLINLVNLLNKWNKAYNLTSVRDPQEMLVKHILDSLVVSPYLQGDRFIDVGTGPGLPGLPLAIINPSKQFVLLDSLGKRISFIRNAIRELRLTNVTPVLSRVEEYQPEDKFDGVLSRAFASLKDMTDWCHHLPKENGYFYALKGIYQEDEINELNKKYTIQKVIELSVPELIGERHLIVLR.

S-adenosyl-L-methionine-binding positions include Gly73, Leu78, 124–125 (VE), and Arg139.

It belongs to the methyltransferase superfamily. RNA methyltransferase RsmG family.

The protein localises to the cytoplasm. It catalyses the reaction guanosine(527) in 16S rRNA + S-adenosyl-L-methionine = N(7)-methylguanosine(527) in 16S rRNA + S-adenosyl-L-homocysteine. Functionally, specifically methylates the N7 position of guanine in position 527 of 16S rRNA. This chain is Ribosomal RNA small subunit methyltransferase G, found in Haemophilus influenzae (strain 86-028NP).